We begin with the raw amino-acid sequence, 575 residues long: Alpha-(1,6)-fucosyltransferase (575 aa).

Residues 1 to 9 (MRPWTGSWR) are Cytoplasmic-facing. Residues 10–30 (WIMLILFAWGTLLFYIGGHLV) form a helical; Signal-anchor for type II membrane protein membrane-spanning segment. Residues 31-575 (RDNDHPDHSS…KYPTYPEAEK (545 aa)) are Lumenal-facing. 3 disulfide bridges follow: C204-C266, C212-C230, and C218-C222. Residues 206–493 (KAKKLVCNIN…PDASANFHSL (288 aa)) form the GT23 domain. Position 278 is a phosphoserine (S278). The short motif at 299 to 305 (PRPPYLP) is the SH3-binding element. The important for donor substrate binding stretch occupies residues 365–366 (RR). C465 and C472 form a disulfide bridge. In terms of domain architecture, SH3 spans 502-563 (QNAHNQIAIY…PSYKVREKIE (62 aa)).

The protein belongs to the glycosyltransferase 23 family. In terms of processing, tyrosine phosphorylated by PKDCC/VLK.

It localises to the golgi apparatus. The protein resides in the golgi stack membrane. The catalysed reaction is N(4)-{beta-D-GlcNAc-(1-&gt;2)-alpha-D-Man-(1-&gt;3)-[beta-D-GlcNAc-(1-&gt;2)-alpha-D-Man-(1-&gt;6)]-beta-D-Man-(1-&gt;4)-beta-D-GlcNAc-(1-&gt;4)-beta-D-GlcNAc}-L-asparaginyl-[protein] + GDP-beta-L-fucose = an N(4)-{beta-D-GlcNAc-(1-&gt;2)-alpha-D-Man-(1-&gt;3)-[beta-D-GlcNAc-(1-&gt;2)-alpha-D-Man-(1-&gt;6)]-beta-D-Man-(1-&gt;4)-beta-D-GlcNAc-(1-&gt;4)-[alpha-L-Fuc-(1-&gt;6)]-beta-D-GlcNAc}-L-asparaginyl-[protein] + GDP + H(+). It functions in the pathway protein modification; protein glycosylation. Functionally, catalyzes the addition of fucose in alpha 1-6 linkage to the first GlcNAc residue, next to the peptide chains in N-glycans. This is Alpha-(1,6)-fucosyltransferase (FUT8) from Homo sapiens (Human).